Reading from the N-terminus, the 161-residue chain is Cap-associated protein CAF20 (161 aa).

The segment covering H52–P72 has biased composition (basic residues). The interval H52 to P108 is disordered. 2 positions are modified to phosphoserine: S78 and S91. 3 positions are modified to phosphothreonine: T99, T101, and T102. S154 is modified (phosphoserine).

It belongs to the CAF20 family. Interacts with TIF45. Phosphorylated by casein kinase II complex (CK2).

It localises to the cytoplasm. Its function is as follows. Acts as an inhibitor of cap-dependent translation. Competes with eIF4G1/TIF4631 and EAP1 for binding to eIF4E/TIF45 and interferes with the formation of the eIF4F complex, inhibiting translation and stabilizing mRNA. Binding affinity for eIF4E/TIF45 is 10-fold less than that of eIF4G1/TIF4631. Required for induction of pseudohyphal growth in response to nitrogen limitation, probably by regulating STE12 translation. This chain is Cap-associated protein CAF20 (CAF20), found in Saccharomyces cerevisiae (strain ATCC 204508 / S288c) (Baker's yeast).